The following is a 1031-amino-acid chain: Sodium/potassium-transporting ATPase subunit alpha (1031 aa).

Residues M1–A33 are disordered. Over residues L7 to S23 the composition is skewed to basic and acidic residues. Over residues A24–A33 the composition is skewed to basic residues. The next 4 helical transmembrane spans lie at M102–I123, L136–Y155, F297–M319, and A326–A354. D382 serves as the catalytic 4-aspartylphosphate intermediate. Position 512 (K512) interacts with ATP. Positions 725 and 729 each coordinate Mg(2+). 4 helical membrane passes run I795–I818, L857–A882, L924–I944, and F961–L986.

It belongs to the cation transport ATPase (P-type) (TC 3.A.3) family. Type IIC subfamily. In terms of assembly, the sodium/potassium-transporting ATPase is composed of a catalytic alpha subunit, an auxiliary non-catalytic beta subunit and an additional regulatory subunit.

It localises to the cell membrane. It carries out the reaction K(+)(out) + Na(+)(in) + ATP + H2O = K(+)(in) + Na(+)(out) + ADP + phosphate + H(+). With respect to regulation, this alpha subunit is resistant to ouabain. This is the catalytic component of the active enzyme, which catalyzes the hydrolysis of ATP coupled with the exchange of sodium and potassium ions across the plasma membrane. This action creates the electrochemical gradient of sodium and potassium ions, providing the energy for active transport of various nutrients. The polypeptide is Sodium/potassium-transporting ATPase subunit alpha (Hydra vulgaris (Hydra)).